Reading from the N-terminus, the 241-residue chain is Probable transcriptional regulatory protein H16_A0916 (241 aa).

This sequence belongs to the TACO1 family.

It localises to the cytoplasm. The sequence is that of Probable transcriptional regulatory protein H16_A0916 from Cupriavidus necator (strain ATCC 17699 / DSM 428 / KCTC 22496 / NCIMB 10442 / H16 / Stanier 337) (Ralstonia eutropha).